We begin with the raw amino-acid sequence, 92 residues long: Small archaeal modifier protein 3 (92 aa).

Glycyl lysine isopeptide (Lys-Gly) (interchain with G-Cter in SAMP3) cross-links involve residues Lys18, Lys55, and Lys62. Residue Gly92 is modified to Glycyl adenylate; alternate. Residue Gly92 forms a Glycyl lysine isopeptide (Gly-Lys) (interchain with K-? in acceptor proteins); alternate linkage.

In terms of assembly, monomer. Post-translationally, the C-terminal glycine is likely acyl-adenylated (-COAMP) by UbaA.

Functions as a protein modifier covalently attached to lysine residues of substrate proteins. The protein modification process is termed sampylation and involves the formation of an isopeptide bond between the SAMP3 C-terminal glycine carboxylate and the epsilon-amino group of lysine residues on target proteins. Seems to be able to form polymeric chains with itself at Lys-18, Lys-55 and Lys-62, similar to ubiquitin and other ubiquitin-like proteins. SAMP3 appears not to serve as a proteolytic signal in the cell to target proteins for degradation by proteasomes. May regulate molybdenum cofactor (MoCo) biosynthesis by inhibiting the activity of MPT synthase MoaE under aerobic conditions, providing a hierarchy of oxygen use prior to that of alternative electron acceptors such as DMSO. This Haloferax volcanii (strain ATCC 29605 / DSM 3757 / JCM 8879 / NBRC 14742 / NCIMB 2012 / VKM B-1768 / DS2) (Halobacterium volcanii) protein is Small archaeal modifier protein 3 (samp3).